The following is a 496-amino-acid chain: L-arabinose isomerase (496 aa).

4 residues coordinate Mn(2+): glutamate 302, glutamate 329, histidine 346, and histidine 445.

It belongs to the arabinose isomerase family. Requires Mn(2+) as cofactor.

The enzyme catalyses beta-L-arabinopyranose = L-ribulose. It functions in the pathway carbohydrate degradation; L-arabinose degradation via L-ribulose; D-xylulose 5-phosphate from L-arabinose (bacterial route): step 1/3. Functionally, catalyzes the conversion of L-arabinose to L-ribulose. In Thermotoga petrophila (strain ATCC BAA-488 / DSM 13995 / JCM 10881 / RKU-1), this protein is L-arabinose isomerase.